We begin with the raw amino-acid sequence, 802 residues long: Mitochondrial inner membrane m-AAA protease component AFG3L2 (802 aa).

A mitochondrion-targeting transit peptide spans 1 to 38 (MAHRCLLLWSRGGCRRGLPPLLVPRGCLGPDRRPCLRT). Positions 39–66 (LYQYATVQTASSRRSLLRDVIAAYQRFC) are cleaved as a propeptide — removed in mature form. The disordered stretch occupies residues 76–124 (YFPNGKNGKKASEPKEAVGEKKEPQPSGPQPSGGAGGGGGKRRGKKEDS). Residues 85–99 (KASEPKEAVGEKKEP) show a composition bias toward basic and acidic residues. K116 is modified (N6-succinyllysine). The next 2 membrane-spanning stretches (helical) occupy residues 142-162 (FRMY…YFVF) and 250-270 (GSFL…LYTI). Positions 309, 310, 351, 352, 353, 354, 355, and 489 each coordinate ATP. H573 is a binding site for Zn(2+). E574 is a catalytic residue. Residues H577 and D648 each contribute to the Zn(2+) site. The interval 759-802 (VEGTGSLDEDTSLPEGLQDWNKEREKEEKKEKEKEEPLNEKVVS) is disordered. The segment covering 778 to 802 (WNKEREKEEKKEKEKEEPLNEKVVS) has biased composition (basic and acidic residues).

The protein in the N-terminal section; belongs to the AAA ATPase family. In the C-terminal section; belongs to the peptidase M41 family. As to quaternary structure, homohexamer. Forms heterohexamers with SPG7 and AFG3L1. The m-AAA protease is either composed of homohexamers of AFG3L2 or heterohexamers of AFG3L1, AFG3L2 and/or SPG7. Interacts with MAIP1. Interacts with DNAJC19. Interacts with PHB2. Requires Zn(2+) as cofactor. Post-translationally, upon import into the mitochondrion, the N-terminal transit peptide is cleaved to generate an intermediate form which undergoes autocatalytic proteolytic processing to generate the proteolytically active mature form. In terms of tissue distribution, highly expressed in the cerebellar Purkinje cells.

Its subcellular location is the mitochondrion inner membrane. The catalysed reaction is ATP + H2O = ADP + phosphate + H(+). In terms of biological role, catalytic component of the m-AAA protease, a protease that plays a key role in proteostasis of inner mitochondrial membrane proteins, and which is essential for axonal and neuron development. AFG3L2 possesses both ATPase and protease activities: the ATPase activity is required to unfold substrates, threading them into the internal proteolytic cavity for hydrolysis into small peptide fragments. The m-AAA protease carries out protein quality control in the inner membrane of the mitochondria by mediating degradation of mistranslated or misfolded polypeptides. The m-AAA protease complex also promotes the processing and maturation of mitochondrial proteins, such as MRPL32/bL32m, PINK1 and SP7. Mediates protein maturation of the mitochondrial ribosomal subunit MRPL32/bL32m by catalyzing the cleavage of the presequence of MRPL32/bL32m prior to assembly into the mitochondrial ribosome. Required for SPG7 maturation into its active mature form after SPG7 cleavage by mitochondrial-processing peptidase (MPP). Required for the maturation of PINK1 into its 52kDa mature form after its cleavage by mitochondrial-processing peptidase (MPP). Acts as a regulator of calcium in neurons by mediating degradation of SMDT1/EMRE before its assembly with the uniporter complex, limiting the availability of SMDT1/EMRE for MCU assembly and promoting efficient assembly of gatekeeper subunits with MCU. Promotes the proteolytic degradation of GHITM upon hyperpolarization of mitochondria: progressive GHITM degradation leads to respiratory complex I degradation and broad reshaping of the mitochondrial proteome by AFG3L2. Also acts as a regulator of mitochondrial glutathione homeostasis by mediating cleavage and degradation of SLC25A39. SLC25A39 cleavage is prevented when SLC25A39 binds iron-sulfur. Involved in the regulation of OMA1-dependent processing of OPA1. May act by mediating processing of OMA1 precursor, participating in OMA1 maturation. In Mus musculus (Mouse), this protein is Mitochondrial inner membrane m-AAA protease component AFG3L2.